Here is a 162-residue protein sequence, read N- to C-terminus: MRILKPYLRSTSIQCYLCLLLNSHFLTEAGIHVFILGCISAGLPKTEANWQSVIHDLKTIEHLIQSMHMDATLYTESDAHPNCKVTALQCFLLELRVILHESKNAAIYEIIENLTMLADRNLSSIENKTELGCKECEELEKKSIKEFLKSFVHIVQMFINTS.

Positions 1–29 (MRILKPYLRSTSIQCYLCLLLNSHFLTEA) are cleaved as a signal peptide. The propeptide occupies 30 to 48 (GIHVFILGCISAGLPKTEA). Intrachain disulfides connect Cys83/Cys133 and Cys90/Cys136. 3 N-linked (GlcNAc...) asparagine glycosylation sites follow: Asn113, Asn121, and Asn127.

The protein belongs to the IL-15/IL-21 family.

It localises to the secreted. Its function is as follows. Cytokine that plays a major role in the development of inflammatory and protective immune responses to microbial invaders and parasites by modulating immune cells of both the innate and adaptive immune systems. Stimulates the proliferation of natural killer cells, T-cells and B-cells and promotes the secretion of several cytokines. In monocytes, induces the production of IL8 and monocyte chemotactic protein 1/CCL2, two chemokines that attract neutrophils and monocytes respectively to sites of infection. Unlike most cytokines, which are secreted in soluble form, IL15 is expressed in association with its high affinity IL15RA on the surface of IL15-producing cells and delivers signals to target cells that express IL2RB and IL2RG receptor subunits. Binding to its receptor triggers the phosphorylation of JAK1 and JAK3 and the recruitment and subsequent phosphorylation of signal transducer and activator of transcription-3/STAT3 and STAT5. In mast cells, induces the rapid tyrosine phosphorylation of STAT6 and thereby controls mast cell survival and release of cytokines such as IL4. The sequence is that of Interleukin-15 (IL15) from Ovis aries (Sheep).